We begin with the raw amino-acid sequence, 400 residues long: Cysteine desulfurase (400 aa).

Pyridoxal 5'-phosphate contacts are provided by residues 72-73 (GT), Asn152, Gln180, and 200-202 (SGH). At Lys203 the chain carries N6-(pyridoxal phosphate)lysine. Residue Thr238 coordinates pyridoxal 5'-phosphate. The active-site Cysteine persulfide intermediate is Cys326. [2Fe-2S] cluster is bound at residue Cys326.

It belongs to the class-V pyridoxal-phosphate-dependent aminotransferase family. NifS/IscS subfamily. Homodimer. The cofactor is pyridoxal 5'-phosphate.

It catalyses the reaction (sulfur carrier)-H + L-cysteine = (sulfur carrier)-SH + L-alanine. Catalyzes the removal of elemental sulfur atoms from cysteine to produce alanine. Seems to participate in the biosynthesis of the nitrogenase metalloclusters by providing the inorganic sulfur required for the Fe-S core formation. The sequence is that of Cysteine desulfurase from Gluconacetobacter diazotrophicus (strain ATCC 49037 / DSM 5601 / CCUG 37298 / CIP 103539 / LMG 7603 / PAl5).